The following is a 406-amino-acid chain: Endoplasmic reticulum resident protein 44 (406 aa).

The N-terminal stretch at 1 to 29 (MNPAVFLSLADLRCSLLLLVTSIFTPITA) is a signal peptide. One can recognise a Thioredoxin domain in the interval 30-138 (EIASLDSENI…VKALADYIRQ (109 aa)). 2 disulfides stabilise this stretch: cysteine 189/cysteine 241 and cysteine 301/cysteine 318. Residues 236 to 285 (WIQDKCVPLVREITFENGEELTEEGLPFLILFHMKDDTESLEIFQNEVAR) form an interaction with ITPR1 region. The interval 360 to 387 (FHHGPDPTDTAPGEQDQDVASSPPESSF) is disordered. The segment covering 377-387 (DVASSPPESSF) has biased composition (polar residues). The short motif at 403-406 (RDEL) is the Prevents secretion from ER element.

In terms of assembly, forms mixed disulfides with both ERO1A and ERO1B and cargo folding intermediates; the interactions with ERO1A and ERO1B result in their retention in the endoplasmic reticulum. Directly interacts with ITPR1 in a pH-, redox state- and calcium-dependent manner, but not with ITPR2 or ITPR3. The strength of this interaction inversely correlates with calcium concentration. As to expression, widely expressed.

Its subcellular location is the endoplasmic reticulum lumen. Mediates thiol-dependent retention in the early secretory pathway, forming mixed disulfides with substrate proteins through its conserved CRFS motif. Inhibits the calcium channel activity of ITPR1. May have a role in the control of oxidative protein folding in the endoplasmic reticulum. Required to retain ERO1A and ERO1B in the endoplasmic reticulum. The protein is Endoplasmic reticulum resident protein 44 (Erp44) of Mus musculus (Mouse).